The following is a 266-amino-acid chain: ATP synthase subunit a (266 aa).

Transmembrane regions (helical) follow at residues 38–58, 99–119, 126–146, 162–182, 191–211, and 224–244; these read KQML…LLAA, LLFS…IPLI, HVGG…AIGV, GVPV…NFLV, LFAT…GIEY, and SVLV…IMAL.

This sequence belongs to the ATPase A chain family. F-type ATPases have 2 components, CF(1) - the catalytic core - and CF(0) - the membrane proton channel. CF(1) has five subunits: alpha(3), beta(3), gamma(1), delta(1), epsilon(1). CF(0) has three main subunits: a(1), b(2) and c(9-12). The alpha and beta chains form an alternating ring which encloses part of the gamma chain. CF(1) is attached to CF(0) by a central stalk formed by the gamma and epsilon chains, while a peripheral stalk is formed by the delta and b chains.

It localises to the cell membrane. Key component of the proton channel; it plays a direct role in the translocation of protons across the membrane. The sequence is that of ATP synthase subunit a from Arthrobacter sp. (strain FB24).